A 209-amino-acid chain; its full sequence is Small ribosomal subunit protein uS4 (209 aa).

The S4 RNA-binding domain occupies 99–159; sequence SRLDSVCYRM…EKSKAQLRIK (61 aa).

This sequence belongs to the universal ribosomal protein uS4 family. As to quaternary structure, part of the 30S ribosomal subunit. Contacts protein S5. The interaction surface between S4 and S5 is involved in control of translational fidelity.

Its function is as follows. One of the primary rRNA binding proteins, it binds directly to 16S rRNA where it nucleates assembly of the body of the 30S subunit. In terms of biological role, with S5 and S12 plays an important role in translational accuracy. The polypeptide is Small ribosomal subunit protein uS4 (Thiobacillus denitrificans (strain ATCC 25259 / T1)).